A 239-amino-acid chain; its full sequence is Tetraspanin-9 (239 aa).

At 1–13 (MARGCLCCLKYMM) the chain is on the cytoplasmic side. The chain crosses the membrane as a helical span at residues 14–34 (FLFNLIFWLCGCGLLGVGIWL). At 35–55 (SVSQGNFATFSPSFPSLSAAN) the chain is on the extracellular side. Residues 56-76 (LVIAIGTIVMVTGFLGCLGAI) form a helical membrane-spanning segment. Residues 77-85 (KENKCLLLS) lie on the Cytoplasmic side of the membrane. The helical transmembrane segment at 86–106 (FFIVLLVILLAELILLILFFV) threads the bilayer. At 107–203 (YMDKVNENAK…VKMWFDDNKH (97 aa)) the chain is on the extracellular side. Asn180 carries an N-linked (GlcNAc...) asparagine glycan. Residues 204-224 (VLGTVGMCILIMQILGMAFSM) form a helical membrane-spanning segment. Over 225-239 (TLFQHIHRTGKKYDA) the chain is Cytoplasmic.

The protein belongs to the tetraspanin (TM4SF) family. In terms of assembly, found in a complex with GP6. In terms of processing, glycosylated. In terms of tissue distribution, expressed in megakaryocytes and platelets (at protein level).

The protein resides in the membrane. The chain is Tetraspanin-9 (TSPAN9) from Homo sapiens (Human).